We begin with the raw amino-acid sequence, 435 residues long: 3-ketoacyl-CoA thiolase (435 aa).

Cysteine 98 functions as the Acyl-thioester intermediate in the catalytic mechanism. Active-site proton acceptor residues include histidine 391 and cysteine 421.

It belongs to the thiolase-like superfamily. Thiolase family. As to quaternary structure, heterotetramer of two alpha chains (FadJ) and two beta chains (FadI).

It localises to the cytoplasm. The catalysed reaction is an acyl-CoA + acetyl-CoA = a 3-oxoacyl-CoA + CoA. The protein operates within lipid metabolism; fatty acid beta-oxidation. Its function is as follows. Catalyzes the final step of fatty acid oxidation in which acetyl-CoA is released and the CoA ester of a fatty acid two carbons shorter is formed. The chain is 3-ketoacyl-CoA thiolase from Vibrio cholerae serotype O1 (strain ATCC 39315 / El Tor Inaba N16961).